The following is a 209-amino-acid chain: MADS-box transcription factor 2 (209 aa).

An MADS-box domain is found at 1–61 (MGRGKIEIKR…GKLYDYCSPK (61 aa)). Residues 84–170 (HKSLSAEIDR…AFKLHQQDIA (87 aa)) enclose the K-box domain.

In terms of tissue distribution, highly expressed in anthers and carpels. Expressed in pollen, tapetum and stigma.

It is found in the nucleus. Its function is as follows. Probable transcription factor involved in the development of floral organs. B-class protein required for normal development of lodicules (whorl 2). The chain is MADS-box transcription factor 2 (MADS2) from Oryza sativa subsp. japonica (Rice).